The chain runs to 61 residues: UPF0434 protein TM1040_0056 (61 aa).

It belongs to the UPF0434 family.

This Ruegeria sp. (strain TM1040) (Silicibacter sp.) protein is UPF0434 protein TM1040_0056.